Reading from the N-terminus, the 392-residue chain is Selenide, water dikinase 1 (392 aa).

Residue Cys-31 is part of the active site. Residues Lys-32, 67–69, Asp-87, Asp-110, and 161–164 contribute to the ATP site; these read GMD and GGQT. Asp-69 provides a ligand contact to Mg(2+). Mg(2+) is bound at residue Asp-110. Asp-265 contacts Mg(2+).

It belongs to the selenophosphate synthase 1 family. Class II subfamily. As to quaternary structure, homodimer. The cofactor is Mg(2+).

The protein localises to the cell membrane. It is found in the nucleus membrane. It catalyses the reaction hydrogenselenide + ATP + H2O = selenophosphate + AMP + phosphate + 2 H(+). In terms of biological role, synthesizes selenophosphate from selenide and ATP. This Xenopus tropicalis (Western clawed frog) protein is Selenide, water dikinase 1 (sephs1).